The primary structure comprises 836 residues: Outer membrane usher protein PapC (836 aa).

The N-terminal stretch at 1–24 (MKDRIPFAVNNITCVILLSLFCNA) is a signal peptide. A disulfide bridge connects residues cysteine 814 and cysteine 832.

Belongs to the fimbrial export usher family.

It localises to the cell outer membrane. Its function is as follows. Involved in the export and assembly of pili subunits across the outer membrane. Forms a hexameric ring-shaped pore in the outer bacterial membrane. The 2 nanometer-diameter pore allows the passage of the thin tip fibrillum. As for the rod, it probably unwinds into linear fibers which would therefore be narrow enough to pass through the pore. The protein is Outer membrane usher protein PapC (papC) of Escherichia coli.